A 334-amino-acid polypeptide reads, in one-letter code: MSINMNANFLKLLTHFRRHDLTNFKSEHDTLYEKALETGDHLEVTSHYYSVMSTVIDEYFGGNFHFVPPKFEGQKLEEALKSLHCHIAEKLELSENVHCLDIGCGIGGVMLDIADFGAKLTGVTIAPNEAEIGNEKFANMGISDRCKIVAADCQKMPFEDSTFDVAYAIYSLKYIPNLDKVMKEIQRVLKPGGKFIVYDLIKTNDYDKDNKEHYKTLHHLEYACGMPSLHTQSEVEAAAEKWEMPVVERENLEETYGNRAFHYCFSASPMFMWLVSSPVIDHTIRMAEILRILPAGFKQFNRTFLCGTVNSIVGGGRMGILSGADILLFEKKKI.

This sequence belongs to the class I-like SAM-binding methyltransferase superfamily. Erg6/SMT family. As to expression, expressed in the pharynx and hypodermal syncytium.

It catalyses the reaction 5alpha-cholest-7-en-3-one + S-adenosyl-L-methionine = 4alpha-methyl-5alpha-cholest-7-en-3-one + S-adenosyl-L-homocysteine + H(+). The protein operates within steroid hormone biosynthesis; dafachronic acid biosynthesis. Its function is as follows. Catalyzes the methyl transfer from S-adenosyl-methionine to the C-4 of the A-ring sterols such as lathosterone (5alpha-cholest-7-en-3-one) thereby rendering them unsuitable as ligand precursors. May irreversibly shunt sterols away from hormone dafachronic acid production. Dafachronic acids act as ligands and bind directly to the nuclear hormone receptor (NHR) daf-12 suppressing dauer formation and inducing reproductive growth. By reducing the biosynthesis of dafachronic acids, this methyltransferase can regulate dauer larva formation. This Caenorhabditis elegans protein is Sterol 4-C-methyltransferase strm-1 (strm-1).